The primary structure comprises 103 residues: Small ribosomal subunit protein bS6c (103 aa).

This sequence belongs to the bacterial ribosomal protein bS6 family.

It is found in the plastid. Its subcellular location is the chloroplast. Its function is as follows. Binds together with bS18 to 16S ribosomal RNA. The sequence is that of Small ribosomal subunit protein bS6c (rps6) from Cyanidium caldarium (Red alga).